Here is a 2084-residue protein sequence, read N- to C-terminus: MAP kinase-activating death domain protein (2084 aa).

The uDENN domain occupies 25–352; that stretch reads TPPMPKGLQG…VPVPGSTRVE (328 aa). The segment at 117–253 is disordered; sequence PSSAAGSAGA…SPRASRKRTK (137 aa). Over residues 118–131 the composition is skewed to low complexity; sequence SSAAGSAGAGNDRP. Over residues 132–152 the composition is skewed to gly residues; that stretch reads GNGGPGGHGGGAGGGAGGGGR. The segment covering 160–173 has biased composition (basic and acidic residues); the sequence is FRRESWRKSMERSS. Over residues 174–183 the composition is skewed to low complexity; sequence DSAFSSDYRS. Basic and acidic residues predominate over residues 189 to 204; it reads DSDRELTSRRDSDQQR. Positions 205-215 are enriched in basic residues; the sequence is LHSHHSHHQPH. The span at 234-245 shows a compositional bias: polar residues; it reads DSESGGSHSPSP. A cDENN domain is found at 373–514; the sequence is RFSLVDFPLH…EGTILKNHLK (142 aa). Positions 516-678 constitute a dDENN domain; the sequence is ALTSMTATNT…EWSLTPTNVA (163 aa). Disordered stretches follow at residues 557 to 588, 730 to 749, 811 to 863, 891 to 963, 1058 to 1092, 1115 to 1188, and 1305 to 1382; these read TPPH…NSPA, QPTD…SSSY, VASK…TVGS, QESD…SQSS, HSAG…GNNF, FGKK…AENQ, and SSSL…GQST. A compositionally biased stretch (polar residues) spans 558-588; it reads PPHSAQASQRNSMSAQGTISSRQPSPMNSPA. Residues 824-839 show a composition bias toward low complexity; it reads SPVSSSSSRSDLSSPS. A compositionally biased stretch (basic and acidic residues) spans 913–925; that stretch reads HPSDSESRPEKKI. Over residues 946–963 the composition is skewed to low complexity; that stretch reads GSSGSSSSSPGRQSSQSS. Residues 1121–1131 are compositionally biased toward low complexity; sequence QKQVPVQQKQP. The span at 1168 to 1183 shows a compositional bias: basic and acidic residues; that stretch reads TQEELTRQQNQERSHS. The segment covering 1305-1315 has biased composition (low complexity); sequence SSSLLSSHAAS. 2 stretches are compositionally biased toward polar residues: residues 1324-1353 and 1370-1382; these read RSPS…STQL and RLSS…GQST. Residues 1490-1565 enclose the Death domain; the sequence is GMDQGPIEMM…GLVYSQEVHN (76 aa). The span at 1794–1842 shows a compositional bias: low complexity; sequence DIHAQQKQKHQQQQQHQQPQQQQQPHQTTTQQNQPTAVASAVPTTTAPA. Disordered stretches follow at residues 1794–1865 and 1896–2084; these read DIHA…RHTV and VPVP…HRKH. Over residues 1845–1858 the composition is skewed to polar residues; sequence VNPNRMTAKSQAGS. A compositionally biased stretch (pro residues) spans 1896–1907; the sequence is VPVPPTPAPPTS. A compositionally biased stretch (polar residues) spans 1921–1932; the sequence is SQPSTESLASIS. Composition is skewed to pro residues over residues 1933 to 1953 and 1983 to 1993; these read SPPP…PAIP and QYTPQPPPPFV. Composition is skewed to low complexity over residues 2001-2029 and 2059-2077; these read LARA…HSQS and ISGS…ASAS.

It belongs to the MADD family.

The protein localises to the cell membrane. Its subcellular location is the cytoplasm. Guanyl-nucleotide exchange factor that regulates small GTPases. Converts GDP-bound inactive form of Rab3 to the GTP-bound active forms. This Drosophila melanogaster (Fruit fly) protein is MAP kinase-activating death domain protein.